The chain runs to 550 residues: MKPLKTLPAWKALEQHFKSMRNFDMRAAFREDAARFETLSLRCGNLLLDYSKNRVTQETMRHLAQLARESELEEMRNAMCTGERINFTEKRAVLHVALRAPVRPALMVEGVDVEREIAKVLHRMQRFVESVHNGSWRGHTGKPIRNVVNIGIGGSDLGPAMVCHALDHYAVENVRVHFVSNLDPSHLAGTLAQLDPETTLFIVASKTFTTLETLANANSAKAWLLAALRAPEAVARHFVALSTNAQAVEAFGIDPENMFIFWDWVGGRYSLWSAIGLSIALQIGWGNFQALLAGAHAMDVHFKEAPLEANMPVILGMLGIWYANFWGTDTYGVFPYDQRLRLLVPFLQQLDMESNGKNVNRANKLVNYNTGPIVWGAPGTNGQHAFFELVHQGTRLIPTDFLVAAVNLTPLADQHEWLLANCLAQTEALLKGKSRAVIEAELIAQGMTRDDARALAPHKVFPGNRPSNTLLYQKLDPHTLGMLIALYEHKVFVQGVIWQINSFDQWGVELGKQLAPPIRAALSSVRVIGEHDGSTQGLIADIRRRRGLST.

Glutamate 353 serves as the catalytic Proton donor. Residues histidine 384 and lysine 512 contribute to the active site.

It belongs to the GPI family.

The protein resides in the cytoplasm. The catalysed reaction is alpha-D-glucose 6-phosphate = beta-D-fructose 6-phosphate. Its pathway is carbohydrate biosynthesis; gluconeogenesis. It participates in carbohydrate degradation; glycolysis; D-glyceraldehyde 3-phosphate and glycerone phosphate from D-glucose: step 2/4. Its function is as follows. Catalyzes the reversible isomerization of glucose-6-phosphate to fructose-6-phosphate. In Thiobacillus denitrificans (strain ATCC 25259 / T1), this protein is Glucose-6-phosphate isomerase 1.